The primary structure comprises 215 residues: Penicillin-binding protein activator LpoB (215 aa).

A signal peptide spans 1-19 (MMKMCRYALITALAIFLAG). A lipid anchor (N-palmitoyl cysteine) is attached at Cys-20. Cys-20 is lipidated: S-diacylglycerol cysteine. The disordered stretch occupies residues 28 to 78 (APVEEAKPQPQQPAQPQPTVPTVPAVPSVPAQPGPIEHQDQQSGQPAPRVR). Residues 37-48 (PQQPAQPQPTVP) show a composition bias toward pro residues. Positions 49-58 (TVPAVPSVPA) are enriched in low complexity.

The protein belongs to the LpoB family. As to quaternary structure, interacts with PBP1b.

It is found in the cell outer membrane. Functionally, regulator of peptidoglycan synthesis that is essential for the function of penicillin-binding protein 1B (PBP1b). This is Penicillin-binding protein activator LpoB from Klebsiella pneumoniae subsp. pneumoniae (strain ATCC 700721 / MGH 78578).